A 793-amino-acid polypeptide reads, in one-letter code: Phenylalanine--tRNA ligase beta subunit (793 aa).

The 110-residue stretch at 39 to 148 folds into the tRNA-binding domain; sequence AAPFKGVKAA…EGDFPGVDLH (110 aa). One can recognise a B5 domain in the interval 401–476; sequence PPQATIILRK…RLYGYDRLPS (76 aa). Mg(2+) is bound by residues D454, D460, E463, and E464. The FDX-ACB domain occupies 699-792; it reads SKFPAIRRDI…LVTELGAIIR (94 aa).

The protein belongs to the phenylalanyl-tRNA synthetase beta subunit family. Type 1 subfamily. Tetramer of two alpha and two beta subunits. The cofactor is Mg(2+).

The protein localises to the cytoplasm. The catalysed reaction is tRNA(Phe) + L-phenylalanine + ATP = L-phenylalanyl-tRNA(Phe) + AMP + diphosphate + H(+). This chain is Phenylalanine--tRNA ligase beta subunit, found in Nitrosococcus oceani (strain ATCC 19707 / BCRC 17464 / JCM 30415 / NCIMB 11848 / C-107).